Consider the following 595-residue polypeptide: Elongation factor 4 2 (595 aa).

The region spanning 4 to 187 (SHIRNFAIIA…AIKQRLPAPQ (184 aa)) is the tr-type G domain. GTP is bound by residues 16-21 (DHGKST) and 133-136 (NKVD).

This sequence belongs to the TRAFAC class translation factor GTPase superfamily. Classic translation factor GTPase family. LepA subfamily.

It localises to the cell membrane. It carries out the reaction GTP + H2O = GDP + phosphate + H(+). Required for accurate and efficient protein synthesis under certain stress conditions. May act as a fidelity factor of the translation reaction, by catalyzing a one-codon backward translocation of tRNAs on improperly translocated ribosomes. Back-translocation proceeds from a post-translocation (POST) complex to a pre-translocation (PRE) complex, thus giving elongation factor G a second chance to translocate the tRNAs correctly. Binds to ribosomes in a GTP-dependent manner. The polypeptide is Elongation factor 4 2 (Lactiplantibacillus plantarum (strain ATCC BAA-793 / NCIMB 8826 / WCFS1) (Lactobacillus plantarum)).